A 263-amino-acid polypeptide reads, in one-letter code: Endonuclease 8 (263 aa).

The active-site Schiff-base intermediate with DNA is the proline 2. The active-site Proton donor is the glutamate 3. The active-site Proton donor; for beta-elimination activity is lysine 53. DNA contacts are provided by glutamine 70, arginine 125, and asparagine 169. Residues 229-263 (KVFHRDGELCERCGGIIEKTTLSSRPFYWCPGCQH) form an FPG-type zinc finger. The active-site Proton donor; for delta-elimination activity is the arginine 253.

It belongs to the FPG family. It depends on Zn(2+) as a cofactor.

The enzyme catalyses 2'-deoxyribonucleotide-(2'-deoxyribose 5'-phosphate)-2'-deoxyribonucleotide-DNA = a 3'-end 2'-deoxyribonucleotide-(2,3-dehydro-2,3-deoxyribose 5'-phosphate)-DNA + a 5'-end 5'-phospho-2'-deoxyribonucleoside-DNA + H(+). In terms of biological role, involved in base excision repair of DNA damaged by oxidation or by mutagenic agents. Acts as a DNA glycosylase that recognizes and removes damaged bases. Has a preference for oxidized pyrimidines, such as thymine glycol, 5,6-dihydrouracil and 5,6-dihydrothymine. Has AP (apurinic/apyrimidinic) lyase activity and introduces nicks in the DNA strand. Cleaves the DNA backbone by beta-delta elimination to generate a single-strand break at the site of the removed base with both 3'- and 5'-phosphates. The polypeptide is Endonuclease 8 (Escherichia coli O157:H7).